The chain runs to 330 residues: Aspartate--ammonia ligase (330 aa).

This sequence belongs to the class-II aminoacyl-tRNA synthetase family. AsnA subfamily.

It localises to the cytoplasm. It carries out the reaction L-aspartate + NH4(+) + ATP = L-asparagine + AMP + diphosphate + H(+). It functions in the pathway amino-acid biosynthesis; L-asparagine biosynthesis; L-asparagine from L-aspartate (ammonia route): step 1/1. The sequence is that of Aspartate--ammonia ligase from Cronobacter sakazakii (strain ATCC BAA-894) (Enterobacter sakazakii).